A 314-amino-acid polypeptide reads, in one-letter code: Versiconal hemiacetal acetate esterase (314 aa).

Positions 85–87 (HGG) match the Involved in the stabilization of the negatively charged intermediate by the formation of the oxyanion hole motif. Catalysis depends on residues Ser154, Asp255, and His285.

Belongs to the 'GDXG' lipolytic enzyme family.

It catalyses the reaction (2S,3S)-versiconal hemiacetal acetate + H2O = (2S-3S)-versiconal hemiacetal + acetate + H(+). It carries out the reaction (3S)-versiconol acetate + H2O = (S)-versiconol + acetate + H(+). Its pathway is mycotoxin biosynthesis; aflatoxin biosynthesis. Versiconal hemiacetal acetate esterase; part of the gene cluster that mediates the biosynthesis of aflatoxins, a group of polyketide-derived furanocoumarins, and part of the most toxic and carcinogenic compounds among the known mycotoxins. The four major aflatoxins produced by A.parasiticus are aflatoxin B1 (AFB1), aflatoxin B2 (AFB2), aflatoxin G1 (AFG1) and aflatoxin G2 (AFG2). Within the aflatoxin pathway, the versiconal hemiacetal acetate esterase aflJ converts versiconal hemiacetal acetate (VHA) into versiconal (VAL). The biosynthesis of aflatoxins begins with the norsolorinic acid synthase aflC that combines a hexanoyl starter unit produced by the fatty acid synthase aflA/aflB and 7 malonyl-CoA extender units to synthesize the precursor NOR. The second step is the conversion of NOR to averantin and requires the norsolorinic acid ketoreductase aflD, which catalyzes the dehydration of norsolorinic acid to form (1'S)-averantin. The norsolorinic acid reductases aflE and aflF may also play a role in the conversion of NOR to AVN. The cytochrome P450 monooxygenase aflG then catalyzes the hydroxylation of AVN to 5'hydroxyaverantin (HAVN). The next step is performed by the 5'-hydroxyaverantin dehydrogenase aflH that transforms HAVN to 5'-oxoaverantin (OAVN) which is further converted to averufin (AVF) by aflK that plays a dual role in the pathway, as a 5'-oxoaverantin cyclase that mediates conversion of 5'-oxoaverantin, as well as a versicolorin B synthase in a later step in the pathway. The averufin oxidase aflI catalyzes the conversion of AVF to versiconal hemiacetal acetate (VHA). VHA is then the substrate for the versiconal hemiacetal acetate esterase aflJ to yield versiconal (VAL). Versicolorin B synthase aflK then converts VAL to versicolorin B (VERB) by closing the bisfuran ring of aflatoxin which is required for DNA-binding, thus giving to aflatoxin its activity as a mutagen. Then, the activity of the versicolorin B desaturase aflL leads to versicolorin A (VERA). A branch point starts from VERB since it can also be converted to dihydrodemethylsterigmatocystin (DMDHST), probably also by aflL, VERA being a precursor for aflatoxins B1 and G1, and DMDHST for aflatoxins B2 and G2. Next, the versicolorin reductase aflM and the cytochrome P450 monooxygenase aflN are involved in conversion of VERA to demethylsterigmatocystin (DMST). AflX and aflY seem also involved in this step, through probable aflX-mediated epoxide ring-opening step following versicolorin A oxidation and aflY-mediated Baeyer-Villiger oxidation required for the formation of the xanthone ring. The methyltransferase aflO then leads to the modification of DMST to sterigmatocystin (ST), and of DMDHST to dihydrosterigmatocystin (DHST). Both ST and DHST are then substrates of the O-methyltransferase aflP to yield O-methylsterigmatocystin (OMST) and dihydro-O-methylsterigmatocystin (DHOMST), respectively. Finally OMST is converted to aflatoxins B1 and G1, and DHOMST to aflatoxins B2 and G2, via the action of several enzymes including O-methylsterigmatocystin oxidoreductase aflQ, the cytochrome P450 monooxygenase aflU, but also the NADH-dependent flavin oxidoreductase nadA which is specifically required for the synthesis of AFG1. This Aspergillus parasiticus (strain ATCC 56775 / NRRL 5862 / SRRC 143 / SU-1) protein is Versiconal hemiacetal acetate esterase.